We begin with the raw amino-acid sequence, 159 residues long: Eukaryotic translation initiation factor 5A-2 (159 aa).

Residues 1–12 (MSDEEHQFESKA) show a composition bias toward basic and acidic residues. A disordered region spans residues 1–23 (MSDEEHQFESKADAGASKTYPQQ). Residue K52 is modified to Hypusine.

This sequence belongs to the eIF-5A family. Post-translationally, lys-52 undergoes hypusination, a unique post-translational modification that consists in the addition of a butylamino group from spermidine to lysine side chain, leading to the formation of the unusual amino acid hypusine. eIF-5As are the only known proteins to undergo this modification, which is essential for their function.

Functionally, translation factor that promotes translation elongation and termination, particularly upon ribosome stalling at specific amino acid sequence contexts. Binds between the exit (E) and peptidyl (P) site of the ribosome and promotes rescue of stalled ribosome: specifically required for efficient translation of polyproline-containing peptides as well as other motifs that stall the ribosome. Acts as a ribosome quality control (RQC) cofactor by joining the RQC complex to facilitate peptidyl transfer during CAT tailing step. This chain is Eukaryotic translation initiation factor 5A-2 (EIF-5A2), found in Nicotiana plumbaginifolia (Leadwort-leaved tobacco).